The chain runs to 673 residues: Elongation factor G 1 (673 aa).

Residues 3–277 (KELRNIGIIA…SIVDYLPSPL (275 aa)) form the tr-type G domain. Residues 12–19 (AHIDAGKT), 76–80 (DTPGH), and 130–133 (NKMD) each bind GTP.

This sequence belongs to the TRAFAC class translation factor GTPase superfamily. Classic translation factor GTPase family. EF-G/EF-2 subfamily.

The protein resides in the cytoplasm. Functionally, catalyzes the GTP-dependent ribosomal translocation step during translation elongation. During this step, the ribosome changes from the pre-translocational (PRE) to the post-translocational (POST) state as the newly formed A-site-bound peptidyl-tRNA and P-site-bound deacylated tRNA move to the P and E sites, respectively. Catalyzes the coordinated movement of the two tRNA molecules, the mRNA and conformational changes in the ribosome. This Syntrophomonas wolfei subsp. wolfei (strain DSM 2245B / Goettingen) protein is Elongation factor G 1.